A 435-amino-acid chain; its full sequence is Glutamyl-tRNA reductase (435 aa).

Substrate contacts are provided by residues 49 to 52, Ser-118, 123 to 125, and Gln-129; these read TCNR and EPQ. Cys-50 functions as the Nucleophile in the catalytic mechanism. 203–208 serves as a coordination point for NADP(+); the sequence is GAGETI.

This sequence belongs to the glutamyl-tRNA reductase family. In terms of assembly, homodimer.

The catalysed reaction is (S)-4-amino-5-oxopentanoate + tRNA(Glu) + NADP(+) = L-glutamyl-tRNA(Glu) + NADPH + H(+). Its pathway is porphyrin-containing compound metabolism; protoporphyrin-IX biosynthesis; 5-aminolevulinate from L-glutamyl-tRNA(Glu): step 1/2. In terms of biological role, catalyzes the NADPH-dependent reduction of glutamyl-tRNA(Glu) to glutamate 1-semialdehyde (GSA). The sequence is that of Glutamyl-tRNA reductase from Glaesserella parasuis serovar 5 (strain SH0165) (Haemophilus parasuis).